Here is a 132-residue protein sequence, read N- to C-terminus: L-ectoine synthase (132 aa).

The protein belongs to the ectoine synthase family.

It catalyses the reaction (2S)-4-acetamido-2-aminobutanoate = L-ectoine + H2O. It participates in amine and polyamine biosynthesis; ectoine biosynthesis; L-ectoine from L-aspartate 4-semialdehyde: step 3/3. Functionally, catalyzes the circularization of gamma-N-acetyl-alpha,gamma-diaminobutyric acid (ADABA) to ectoine (1,4,5,6-tetrahydro-2-methyl-4-pyrimidine carboxylic acid), which is an excellent osmoprotectant. The polypeptide is L-ectoine synthase (Alkalilimnicola ehrlichii (strain ATCC BAA-1101 / DSM 17681 / MLHE-1)).